Reading from the N-terminus, the 918-residue chain is Bromodomain testis-specific protein (918 aa).

The segment at 1–26 is disordered; it reads MSDVKPPQHFTMNGNPPPPEFKNPKK. In terms of domain architecture, Bromo 1 spans 29–135; sequence RLTNHLQYIE…KLFLEKVAEM (107 aa). Residues 204-215 carry the Nuclear localization signal motif; it reads NGVKRKADTTTP. Disordered regions lie at residues 241–267, 379–430, 575–712, 738–764, and 862–899; these read RGSG…GRRT, EPKN…RAHR, KNKP…SLVS, IPPL…SSSQ, and DTPK…AMSG. Residues 267–376 form the Bromo 2 domain; the sequence is TKLSERLKYC…DVFEFRFSKI (110 aa). The span at 399-416 shows a compositional bias: low complexity; sequence SPSSSESSDSESSSPENS. Positions 426–452 form a coiled coil; sequence ERAHRLASLEEQQLKAVREQLQLLTQT. The NET domain maps to 496 to 578; the sequence is DSEEEMNTLP…GCLRKKKNKP (83 aa). The span at 575–584 shows a compositional bias: basic residues; it reads KNKPPKKSKI. A compositionally biased stretch (basic and acidic residues) spans 605 to 617; sequence KIETDGEIKDTTH. 2 stretches are compositionally biased toward low complexity: residues 622 to 648 and 739 to 764; these read SDSS…DSDS and PPLL…SSSQ. A coiled-coil region spans residues 815–902; it reads EKELTTASRG…RREAMSGVID (88 aa). The segment covering 877 to 896 has biased composition (basic and acidic residues); it reads VDREREMARKREQERRRREA.

The protein belongs to the BET family.

The protein resides in the nucleus. Its function is as follows. Testis-specific chromatin protein that specifically binds histone H4 acetylated at 'Lys-5' and 'Lys-8' (H4K5ac and H4K8ac, respectively) and plays a key role in spermatogenesis. Required in late pachytene spermatocytes: plays a role in meiotic and post-meiotic cells by binding to acetylated histones at the promoter of specific meiotic and post-meiotic genes, facilitating their activation at the appropriate time. In the post-meiotic phase of spermatogenesis, binds to hyperacetylated histones and participates in their general removal from DNA. Also recognizes and binds a subset of butyrylated histones: able to bind histone H4 butyrylated at 'Lys-8' (H4K8ac), while it is not able to bind H4 butyrylated at 'Lys-5' (H4K5ac). The protein is Bromodomain testis-specific protein (brdt) of Danio rerio (Zebrafish).